Reading from the N-terminus, the 89-residue chain is MSITAERKSALIKEYATNEGDTGSPEVQVAILTERITNLTEHFKGHKKDNHSRRGLLTLVSTRRSLLDYLKKKDEGRYSKLIASLGIRR.

Belongs to the universal ribosomal protein uS15 family. Part of the 30S ribosomal subunit. Forms a bridge to the 50S subunit in the 70S ribosome, contacting the 23S rRNA.

Functionally, one of the primary rRNA binding proteins, it binds directly to 16S rRNA where it helps nucleate assembly of the platform of the 30S subunit by binding and bridging several RNA helices of the 16S rRNA. In terms of biological role, forms an intersubunit bridge (bridge B4) with the 23S rRNA of the 50S subunit in the ribosome. The polypeptide is Small ribosomal subunit protein uS15 (Allorhizobium ampelinum (strain ATCC BAA-846 / DSM 112012 / S4) (Agrobacterium vitis (strain S4))).